A 399-amino-acid polypeptide reads, in one-letter code: Lysosomal acid lipase/cholesteryl ester hydrolase (399 aa).

A signal peptide spans 1–27 (MKMRFLGLVVCLVLWTLHSEGSGGKLT). The propeptide at 28–76 (AVDPETNMNVSEIISYWGFPSEEYLVETEDGYILCLNRIPHGRKNHSDK) is removed in mature form. 4 N-linked (GlcNAc...) asparagine glycosylation sites follow: Asn36, Asn72, Asn101, and Asn161. The AB hydrolase-1 domain maps to 80 to 380 (PVVFLQHGLL…EWEHLDFIWG (301 aa)). The active-site Charge relay system is Ser174. 2 N-linked (GlcNAc...) asparagine glycosylation sites follow: Asn273 and Asn321. The active-site Charge relay system is the His374.

The protein belongs to the AB hydrolase superfamily. Lipase family. In terms of assembly, monomer. Glycosylation is not essential for catalytic activity. As to expression, most abundantly expressed in brain, lung, kidney and mammary gland, a moderate expression seen in placenta and expressed at low levels in the liver and heart.

The protein resides in the lysosome. It catalyses the reaction a sterol ester + H2O = a sterol + a fatty acid + H(+). The catalysed reaction is cholesteryl (9Z-octadecenoate) + H2O = cholesterol + (9Z)-octadecenoate + H(+). The enzyme catalyses a triacylglycerol + H2O = a 1,2-diacylglycerol + a fatty acid + H(+). It carries out the reaction 1,2-di-(9Z-octadecenoyl)-glycerol + (9Z)-octadecenoate + H(+) = 1,2,3-tri-(9Z-octadecenoyl)-glycerol + H2O. It catalyses the reaction a 1,2-diacylglycerol + H2O = a 1-acylglycerol + a fatty acid + H(+). The catalysed reaction is 1,2-di-(9Z-octadecenoyl)-glycerol + H2O = 1-(9Z-octadecenoyl)-glycerol + (9Z)-octadecenoate + H(+). The enzyme catalyses a 1,3-diacylglycerol + H2O = a 1-acylglycerol + a fatty acid + H(+). It carries out the reaction 1,3-di-(9Z-octadecenoyl)-glycerol + H2O = 1-(9Z-octadecenoyl)-glycerol + (9Z)-octadecenoate + H(+). Functionally, catalyzes the deacylation of cholesteryl ester core lipids of endocytosed low density lipoproteins to generate free fatty acids and cholesterol. Hydrolyzes triglycerides (1,2,3-triacylglycerol) and diglycerides (such as 1,2-diacylglycerol and 1,3-diacylglycerol) with preference for the acyl moieties at the sn-1 or sn-3 positions. In Homo sapiens (Human), this protein is Lysosomal acid lipase/cholesteryl ester hydrolase (LIPA).